The chain runs to 341 residues: Methionine import ATP-binding protein MetN 2 (341 aa).

The 240-residue stretch at 2–241 (ILLENVKKIY…PQQDITKRFV (240 aa)) folds into the ABC transporter domain. Residue 38–45 (GYSGAGKS) participates in ATP binding.

Belongs to the ABC transporter superfamily. Methionine importer (TC 3.A.1.24) family. The complex is composed of two ATP-binding proteins (MetN), two transmembrane proteins (MetI) and a solute-binding protein (MetQ).

Its subcellular location is the cell membrane. It carries out the reaction L-methionine(out) + ATP + H2O = L-methionine(in) + ADP + phosphate + H(+). It catalyses the reaction D-methionine(out) + ATP + H2O = D-methionine(in) + ADP + phosphate + H(+). Part of the ABC transporter complex MetNIQ involved in methionine import. Responsible for energy coupling to the transport system. This chain is Methionine import ATP-binding protein MetN 2, found in Bacillus thuringiensis subsp. konkukian (strain 97-27).